Here is a 447-residue protein sequence, read N- to C-terminus: Na(+)-translocating NADH-quinone reductase subunit A (447 aa).

The protein belongs to the NqrA family. Composed of six subunits; NqrA, NqrB, NqrC, NqrD, NqrE and NqrF.

It carries out the reaction a ubiquinone + n Na(+)(in) + NADH + H(+) = a ubiquinol + n Na(+)(out) + NAD(+). In terms of biological role, NQR complex catalyzes the reduction of ubiquinone-1 to ubiquinol by two successive reactions, coupled with the transport of Na(+) ions from the cytoplasm to the periplasm. NqrA to NqrE are probably involved in the second step, the conversion of ubisemiquinone to ubiquinol. The polypeptide is Na(+)-translocating NADH-quinone reductase subunit A (Yersinia pestis bv. Antiqua (strain Angola)).